Reading from the N-terminus, the 154-residue chain is ATP synthase subunit b (154 aa).

The helical transmembrane segment at 9-29 (AIAFVIFVWFCMKYVWPPLMA) threads the bilayer.

The protein belongs to the ATPase B chain family. As to quaternary structure, F-type ATPases have 2 components, F(1) - the catalytic core - and F(0) - the membrane proton channel. F(1) has five subunits: alpha(3), beta(3), gamma(1), delta(1), epsilon(1). F(0) has three main subunits: a(1), b(2) and c(10-14). The alpha and beta chains form an alternating ring which encloses part of the gamma chain. F(1) is attached to F(0) by a central stalk formed by the gamma and epsilon chains, while a peripheral stalk is formed by the delta and b chains.

Its subcellular location is the cell inner membrane. F(1)F(0) ATP synthase produces ATP from ADP in the presence of a proton or sodium gradient. F-type ATPases consist of two structural domains, F(1) containing the extramembraneous catalytic core and F(0) containing the membrane proton channel, linked together by a central stalk and a peripheral stalk. During catalysis, ATP synthesis in the catalytic domain of F(1) is coupled via a rotary mechanism of the central stalk subunits to proton translocation. Functionally, component of the F(0) channel, it forms part of the peripheral stalk, linking F(1) to F(0). This Klebsiella pneumoniae subsp. pneumoniae (strain ATCC 700721 / MGH 78578) protein is ATP synthase subunit b.